Consider the following 152-residue polypeptide: Ribosome maturation factor RimP (152 aa).

This sequence belongs to the RimP family.

The protein resides in the cytoplasm. In terms of biological role, required for maturation of 30S ribosomal subunits. The polypeptide is Ribosome maturation factor RimP (Escherichia coli (strain K12 / MC4100 / BW2952)).